We begin with the raw amino-acid sequence, 104 residues long: DNA-directed RNA polymerase subunit omega (104 aa).

Residues 76–104 (IEEEKRRKEEEEKKIKEQIAKEKEDGEKI) form a disordered region.

This sequence belongs to the RNA polymerase subunit omega family. In terms of assembly, the RNAP catalytic core consists of 2 alpha, 1 beta, 1 beta' and 1 omega subunit. When a sigma factor is associated with the core the holoenzyme is formed, which can initiate transcription.

It carries out the reaction RNA(n) + a ribonucleoside 5'-triphosphate = RNA(n+1) + diphosphate. Promotes RNA polymerase assembly. Latches the N- and C-terminal regions of the beta' subunit thereby facilitating its interaction with the beta and alpha subunits. The protein is DNA-directed RNA polymerase subunit omega of Streptococcus pneumoniae (strain CGSP14).